The primary structure comprises 139 residues: Large ribosomal subunit protein uL16 (139 aa).

Belongs to the universal ribosomal protein uL16 family. Part of the 50S ribosomal subunit.

Functionally, binds 23S rRNA and is also seen to make contacts with the A and possibly P site tRNAs. The sequence is that of Large ribosomal subunit protein uL16 (rplP) from Neorickettsia sennetsu (strain ATCC VR-367 / Miyayama) (Ehrlichia sennetsu).